We begin with the raw amino-acid sequence, 301 residues long: Protease HtpX homolog (301 aa).

2 helical membrane-spanning segments follow: residues Val-11 to Ala-31 and Asn-34 to Trp-54. His-138 contacts Zn(2+). Residue Glu-139 is part of the active site. His-142 is a Zn(2+) binding site. 2 helical membrane passes run Ala-154–Phe-174 and Leu-188–Ile-208. Residue Glu-213 coordinates Zn(2+).

The protein belongs to the peptidase M48B family. It depends on Zn(2+) as a cofactor.

It localises to the cell membrane. In Kocuria rhizophila (strain ATCC 9341 / DSM 348 / NBRC 103217 / DC2201), this protein is Protease HtpX homolog.